The primary structure comprises 206 residues: MARYLGPKLKLSRREGTDLFLKSGVRAIESKCKIDTAPGQHGARKPRLSDYGSQLREKQKVRRIYGILERQFRNYYKEANRLKGNTGENLLVLLEGRLDNVVYRMGFAATRAEARQLVSHKAIVVNGRVVNIPSFQVSVNDVVAVREKSKKQARIKASLELAEQREKPTWLEVDAAKMEGVFKRVPERSDLSADINEHLIVELYSK.

The S4 RNA-binding domain maps to 96–156 (GRLDNVVYRM…EKSKKQARIK (61 aa)).

It belongs to the universal ribosomal protein uS4 family. In terms of assembly, part of the 30S ribosomal subunit. Contacts protein S5. The interaction surface between S4 and S5 is involved in control of translational fidelity.

Functionally, one of the primary rRNA binding proteins, it binds directly to 16S rRNA where it nucleates assembly of the body of the 30S subunit. Its function is as follows. With S5 and S12 plays an important role in translational accuracy. The sequence is that of Small ribosomal subunit protein uS4 from Pasteurella multocida (strain Pm70).